Here is a 437-residue protein sequence, read N- to C-terminus: Perilipin-2 (437 aa).

Position 2 is an N-acetylalanine (Ala2). The residue at position 215 (Ser215) is a Phosphoserine. The residue at position 232 (Tyr232) is a Phosphotyrosine. The segment at Ser412–His437 is disordered. Basic and acidic residues predominate over residues Glu421–His437.

This sequence belongs to the perilipin family. Interacts with IRGC. Acylated; primarily with C14, C16 and C18 fatty acids. In terms of processing, phosphorylation at Tyr-232 by isoform 1 of CHKA (CHKalpha2) promotes dissociation from lipid droplets: dissociation is followed by recruitment of autophagosome machinery to lipid droplets and subsequent lipid droplet lipolysis. Post-translationally, polyubiquitination of Nt-acetylatable A-PLIN2 by MARCHF6 lead to degradation by 26S proteasomes. In terms of tissue distribution, milk lipid globules.

The protein localises to the membrane. It is found in the lipid droplet. Structural component of lipid droplets, which is required for the formation and maintenance of lipid storage droplets. The polypeptide is Perilipin-2 (Homo sapiens (Human)).